The primary structure comprises 909 residues: Aconitate hydratase A (909 aa).

[4Fe-4S] cluster-binding residues include Cys450, Cys516, and Cys519.

This sequence belongs to the aconitase/IPM isomerase family. In terms of assembly, monomer. It depends on [4Fe-4S] cluster as a cofactor.

The catalysed reaction is citrate = D-threo-isocitrate. The enzyme catalyses 3-hydroxybutane-1,2,3-tricarboxylate = 2-methyl-cis-aconitate + H2O. It functions in the pathway carbohydrate metabolism; tricarboxylic acid cycle; isocitrate from oxaloacetate: step 2/2. Involved in both the tricarboxylic acid (TCA) and methylcitric acid cycles. Catalyzes the reversible isomerization of citrate to isocitrate via cis-aconitate. Also catalyzes the rehydration of 2-methyl-cis-aconitate to produce 2-methylisocitrate. The apo form of AcnA functions as a RNA-binding regulatory protein which plays a role in the regulation of citrate concentration and in the sporulation. To prevent the accumulation of excessive levels of citrate, it binds near the 5' end of the citZ mRNA, decreasing its stability and thereby limiting the concentration of citrate synthase in the cell. Aconitase also binds to the gerE transcript late in sporulation and stabilizes it for translation, thereby increasing the rate and level of GerE protein accumulation. The chain is Aconitate hydratase A (citB) from Bacillus subtilis (strain 168).